Consider the following 495-residue polypeptide: Probable cytosol aminopeptidase (495 aa).

Mn(2+)-binding residues include Lys258 and Asp263. Residue Lys270 is part of the active site. Residues Asp281, Asp340, and Glu342 each coordinate Mn(2+). The active site involves Arg344.

The protein belongs to the peptidase M17 family. Mn(2+) serves as cofactor.

It localises to the cytoplasm. It catalyses the reaction Release of an N-terminal amino acid, Xaa-|-Yaa-, in which Xaa is preferably Leu, but may be other amino acids including Pro although not Arg or Lys, and Yaa may be Pro. Amino acid amides and methyl esters are also readily hydrolyzed, but rates on arylamides are exceedingly low.. The enzyme catalyses Release of an N-terminal amino acid, preferentially leucine, but not glutamic or aspartic acids.. In terms of biological role, presumably involved in the processing and regular turnover of intracellular proteins. Catalyzes the removal of unsubstituted N-terminal amino acids from various peptides. The protein is Probable cytosol aminopeptidase of Leptospira interrogans serogroup Icterohaemorrhagiae serovar Lai (strain 56601).